The chain runs to 295 residues: Phosphatidylserine decarboxylase proenzyme (295 aa).

Residues aspartate 113, histidine 169, and serine 256 each act as charge relay system; for autoendoproteolytic cleavage activity in the active site. Serine 256 serves as the catalytic Schiff-base intermediate with substrate; via pyruvic acid; for decarboxylase activity. The residue at position 256 (serine 256) is a Pyruvic acid (Ser); by autocatalysis.

The protein belongs to the phosphatidylserine decarboxylase family. PSD-B subfamily. Prokaryotic type II sub-subfamily. In terms of assembly, heterodimer of a large membrane-associated beta subunit and a small pyruvoyl-containing alpha subunit. It depends on pyruvate as a cofactor. In terms of processing, is synthesized initially as an inactive proenzyme. Formation of the active enzyme involves a self-maturation process in which the active site pyruvoyl group is generated from an internal serine residue via an autocatalytic post-translational modification. Two non-identical subunits are generated from the proenzyme in this reaction, and the pyruvate is formed at the N-terminus of the alpha chain, which is derived from the carboxyl end of the proenzyme. The autoendoproteolytic cleavage occurs by a canonical serine protease mechanism, in which the side chain hydroxyl group of the serine supplies its oxygen atom to form the C-terminus of the beta chain, while the remainder of the serine residue undergoes an oxidative deamination to produce ammonia and the pyruvoyl prosthetic group on the alpha chain. During this reaction, the Ser that is part of the protease active site of the proenzyme becomes the pyruvoyl prosthetic group, which constitutes an essential element of the active site of the mature decarboxylase.

It localises to the cell membrane. The enzyme catalyses a 1,2-diacyl-sn-glycero-3-phospho-L-serine + H(+) = a 1,2-diacyl-sn-glycero-3-phosphoethanolamine + CO2. It functions in the pathway phospholipid metabolism; phosphatidylethanolamine biosynthesis; phosphatidylethanolamine from CDP-diacylglycerol: step 2/2. Catalyzes the formation of phosphatidylethanolamine (PtdEtn) from phosphatidylserine (PtdSer). This is Phosphatidylserine decarboxylase proenzyme from Clostridium botulinum (strain Kyoto / Type A2).